The primary structure comprises 274 residues: Probable S-adenosylmethionine-dependent methyltransferase MT3114 (274 aa).

The interval 1–24 is disordered; the sequence is MCAFVPHVPRHSRGDNPPSASTAS.

Belongs to the methyltransferase superfamily.

Its function is as follows. Probable S-adenosylmethionine-dependent methyltransferase required for the 6-O-methylation of the polysaccharide backbone of 6-O-methylglucosyl lipopolysaccharides (MGLP). The polypeptide is Probable S-adenosylmethionine-dependent methyltransferase MT3114 (Mycobacterium tuberculosis (strain CDC 1551 / Oshkosh)).